A 197-amino-acid chain; its full sequence is Non-structural protein 5 (197 aa).

The segment at 16–36 (NIFKNESSSTTSTLSGKSIGR) is disordered. S67 carries the post-translational modification Phosphoserine; by host CK1. D92 contacts Mg(2+). Residues 130-167 (TNHKKEKSKKDKSRKHYPRIEADSDSEDYVLDDSDSDD) are disordered. Residues 131–146 (NHKKEKSKKDKSRKHY) show a composition bias toward basic residues. Positions 152 to 165 (DSDSEDYVLDDSDS) are enriched in acidic residues. S153, S155, S163, and S165 each carry phosphoserine; by host.

It belongs to the rotavirus NSP5 family. As to quaternary structure, homodimer. Interacts with VP1. Interacts with VP2. Interacts with NSP2; this interaction leads to up-regulation of NSP5 hyperphosphorylation and formation of virus factories. Interacts with NSP6. Participates in the selective exclusion of host proteins from stress granules (SG) and P bodies (PB). Also participates in the sequestration of these remodeled organelles in viral factories. Mg(2+) serves as cofactor. Post-translationally, O-glycosylated. In terms of processing, hyperphosphorylated on serine residues, when in dimeric form. Phosphorylation by host CK1 is required for the hyperphosphorylation of NSP5 dimer.

It localises to the host cytoplasm. Functionally, plays an essential role in the viral genome replication. Participates, together with NSP2, in the formation of viral factories (viroplasms), which are large inclusions in the host cytoplasm where replication intermediates are assembled and viral RNA replication takes place. Orchestrates the recruitment of viroplasmic proteins such as capsid proteins to these factories. Participates in the selective exclusion of host proteins from stress granules (SG) and P bodies (PB). Also participates in the sequestration of these remodeled organelles in viral factories. In Homo sapiens (Human), this protein is Non-structural protein 5.